A 248-amino-acid polypeptide reads, in one-letter code: Triosephosphate isomerase (248 aa).

Position 9-11 (9-11 (NWK)) interacts with substrate. His94 functions as the Electrophile in the catalytic mechanism. The active-site Proton acceptor is the Glu166. Substrate-binding positions include Gly172, Ser212, and 233 to 234 (GG).

The protein belongs to the triosephosphate isomerase family. As to quaternary structure, homodimer.

Its subcellular location is the cytoplasm. The catalysed reaction is D-glyceraldehyde 3-phosphate = dihydroxyacetone phosphate. The protein operates within carbohydrate biosynthesis; gluconeogenesis. It functions in the pathway carbohydrate degradation; glycolysis; D-glyceraldehyde 3-phosphate from glycerone phosphate: step 1/1. Involved in the gluconeogenesis. Catalyzes stereospecifically the conversion of dihydroxyacetone phosphate (DHAP) to D-glyceraldehyde-3-phosphate (G3P). This Clostridium botulinum (strain Langeland / NCTC 10281 / Type F) protein is Triosephosphate isomerase.